Consider the following 239-residue polypeptide: MVKQRKTKYTSLPLSSLFEDASLSTKSPKREPSQEKEIKKEEIIKKNKPCKYEEECKRSDCVFLHPGEKMPEKPKPKETERRKTRMCKYVKKCNKGKNCPFAHDESEIYIPECRYGYKCKKQGKDNEPGECKFSHPPPPPPSPPSPPPKEEIKEEIFEFEITNFPTMNGEEPVALESSPTMDFSYLAEEDFLQKFEEKKSLIEESEKHRKCTINGSIDDMMKIFETMEGQDISQYYFNF.

The disordered stretch occupies residues 20–40; sequence DASLSTKSPKREPSQEKEIKK. Residues 28-40 show a composition bias toward basic and acidic residues; that stretch reads PKREPSQEKEIKK. 2 C3H1-type zinc fingers span residues 44 to 68 and 81 to 106; these read IKKN…HPGE and RRKT…HDES. The tract at residues 128 to 151 is disordered; the sequence is PGECKFSHPPPPPPSPPSPPPKEE. A compositionally biased stretch (pro residues) spans 135-147; that stretch reads HPPPPPPSPPSPP.

This Acheta domesticus (House cricket) protein is Putative zinc finger protein 132L.